The sequence spans 132 residues: Large ribosomal subunit protein bL12 (132 aa).

This sequence belongs to the bacterial ribosomal protein bL12 family. In terms of assembly, homodimer. Part of the ribosomal stalk of the 50S ribosomal subunit. Forms a multimeric L10(L12)X complex, where L10 forms an elongated spine to which 2 to 4 L12 dimers bind in a sequential fashion. Binds GTP-bound translation factors.

Its function is as follows. Forms part of the ribosomal stalk which helps the ribosome interact with GTP-bound translation factors. Is thus essential for accurate translation. The chain is Large ribosomal subunit protein bL12 from Prochlorococcus marinus (strain MIT 9211).